A 682-amino-acid polypeptide reads, in one-letter code: Heat shock 70 kDa protein 9, mitochondrial (682 aa).

The N-terminal 46 residues, 1 to 46 (MASVALLRSFRRREVQMASVSAFKSVSANGKNSMFGKLGYLARPFC), are a transit peptide targeting the mitochondrion. Positions 640 to 682 (SKIGEHMSKGSGSSGSDGSSGEGTSGTEQTPEAEFEEASGSRK) are disordered. Over residues 651–663 (GSSGSDGSSGEGT) the composition is skewed to gly residues.

Belongs to the heat shock protein 70 (TC 1.A.33) family. DnaK subfamily. As to quaternary structure, interacts with HSCB.

The protein localises to the mitochondrion. Its subcellular location is the cytoplasm. It localises to the cytosol. Its function is as follows. Chaperone involved in the maturation of iron-sulfur [Fe-S] cluster-containing proteins. Has a low intrinsic ATPase activity which is markedly stimulated by HSCB and ISU1. In cooperation with other chaperones, Hsp70s are key components that facilitate folding of de novo synthesized proteins, assist translocation of precursor proteins into organelles, and are responsible for degradation of damaged protein under stress conditions. The chain is Heat shock 70 kDa protein 9, mitochondrial from Arabidopsis thaliana (Mouse-ear cress).